A 110-amino-acid chain; its full sequence is NADH-quinone oxidoreductase subunit K (110 aa).

The next 3 helical transmembrane spans lie at 13-33, 41-61, and 73-93; these read LNHYLILSSLVFTIGMFGLFM, ILMSIELMLLAVNINFVAFSV, and IIILTVAAAETAIGLAILLIY.

The protein belongs to the complex I subunit 4L family. As to quaternary structure, NDH-1 is composed of 14 different subunits. Subunits NuoA, H, J, K, L, M, N constitute the membrane sector of the complex.

It is found in the cell inner membrane. It catalyses the reaction a quinone + NADH + 5 H(+)(in) = a quinol + NAD(+) + 4 H(+)(out). Functionally, NDH-1 shuttles electrons from NADH, via FMN and iron-sulfur (Fe-S) centers, to quinones in the respiratory chain. The immediate electron acceptor for the enzyme in this species is believed to be ubiquinone. Couples the redox reaction to proton translocation (for every two electrons transferred, four hydrogen ions are translocated across the cytoplasmic membrane), and thus conserves the redox energy in a proton gradient. The polypeptide is NADH-quinone oxidoreductase subunit K (Rickettsia typhi (strain ATCC VR-144 / Wilmington)).